The following is a 310-amino-acid chain: tRNA-cytidine(32) 2-sulfurtransferase (310 aa).

Residues Ser45 to Ser50 carry the PP-loop motif motif. Positions 120, 123, and 211 each coordinate [4Fe-4S] cluster.

The protein belongs to the TtcA family. Homodimer. It depends on Mg(2+) as a cofactor. Requires [4Fe-4S] cluster as cofactor.

Its subcellular location is the cytoplasm. The enzyme catalyses cytidine(32) in tRNA + S-sulfanyl-L-cysteinyl-[cysteine desulfurase] + AH2 + ATP = 2-thiocytidine(32) in tRNA + L-cysteinyl-[cysteine desulfurase] + A + AMP + diphosphate + H(+). It participates in tRNA modification. In terms of biological role, catalyzes the ATP-dependent 2-thiolation of cytidine in position 32 of tRNA, to form 2-thiocytidine (s(2)C32). The sulfur atoms are provided by the cysteine/cysteine desulfurase (IscS) system. This chain is tRNA-cytidine(32) 2-sulfurtransferase, found in Shewanella baltica (strain OS195).